We begin with the raw amino-acid sequence, 382 residues long: Flap endonuclease 1 (382 aa).

The interval 1–104 (MGIKGLSQVI…GELEKRTERR (104 aa)) is N-domain. Asp34 contributes to the Mg(2+) binding site. DNA contacts are provided by Arg47 and Arg70. Asp86, Glu158, Glu160, Asp179, and Asp181 together coordinate Mg(2+). Positions 122–253 (EAEKFERRLV…KKAVELIKQH (132 aa)) are I-domain. Glu158 contributes to the DNA binding site. Residues Gly231 and Asp233 each contribute to the DNA site. Asp233 is a Mg(2+) binding site. The segment at 336 to 344 (TQGRIDSFF) is interaction with PCNA. A compositionally biased stretch (basic and acidic residues) spans 359-368 (KAQEEAEKMK). Positions 359 to 382 (KAQEEAEKMKKGGKKSGPPKKKAK) are disordered. Positions 369–382 (KGGKKSGPPKKKAK) are enriched in basic residues.

Belongs to the XPG/RAD2 endonuclease family. FEN1 subfamily. Interacts with PCNA. Three molecules of crn-1 bind to one PCNA trimer with each molecule binding to one PCNA monomer. PCNA stimulates the nuclease activity without altering cleavage specificity. Mg(2+) serves as cofactor. In terms of processing, phosphorylated. Phosphorylation upon DNA damage induces relocalization to the nuclear plasma.

It is found in the nucleus. It localises to the nucleolus. The protein localises to the nucleoplasm. Its subcellular location is the mitochondrion. Its function is as follows. Structure-specific nuclease with 5'-flap endonuclease and 5'-3' exonuclease activities involved in DNA replication and repair. During DNA replication, cleaves the 5'-overhanging flap structure that is generated by displacement synthesis when DNA polymerase encounters the 5'-end of a downstream Okazaki fragment. It enters the flap from the 5'-end and then tracks to cleave the flap base, leaving a nick for ligation. Also involved in the long patch base excision repair (LP-BER) pathway, by cleaving within the apurinic/apyrimidinic (AP) site-terminated flap. Acts as a genome stabilization factor that prevents flaps from equilibrating into structures that lead to duplications and deletions. Also possesses 5'-3' exonuclease activity on nicked or gapped double-stranded DNA, and exhibits RNase H activity. Also involved in replication and repair of rDNA and in repairing mitochondrial DNA. The chain is Flap endonuclease 1 from Caenorhabditis briggsae.